A 361-amino-acid polypeptide reads, in one-letter code: Holliday junction branch migration complex subunit RuvB (361 aa).

A disordered region spans residues 1 to 21; it reads MHKDEDQRLLGAVPLPNDPDR. Residues 1-184 form a large ATPase domain (RuvB-L) region; sequence MHKDEDQRLL…FGIPIRLNFY (184 aa). ATP contacts are provided by residues L23, R24, G65, K68, T69, T70, 131–133, R174, Y184, and R221; that span reads EDY. Residue T69 participates in Mg(2+) binding. The segment at 185-255 is small ATPAse domain (RuvB-S); it reads TIEELEYIVQ…IADEALSRLE (71 aa). Residues 258-361 form a head domain (RuvB-H) region; that stretch reads HLGLDPLDRR…QTVLWDEADD (104 aa). Residues R294, R313, and R318 each coordinate DNA.

It belongs to the RuvB family. As to quaternary structure, homohexamer. Forms an RuvA(8)-RuvB(12)-Holliday junction (HJ) complex. HJ DNA is sandwiched between 2 RuvA tetramers; dsDNA enters through RuvA and exits via RuvB. An RuvB hexamer assembles on each DNA strand where it exits the tetramer. Each RuvB hexamer is contacted by two RuvA subunits (via domain III) on 2 adjacent RuvB subunits; this complex drives branch migration. In the full resolvosome a probable DNA-RuvA(4)-RuvB(12)-RuvC(2) complex forms which resolves the HJ.

It localises to the cytoplasm. It catalyses the reaction ATP + H2O = ADP + phosphate + H(+). Its function is as follows. The RuvA-RuvB-RuvC complex processes Holliday junction (HJ) DNA during genetic recombination and DNA repair, while the RuvA-RuvB complex plays an important role in the rescue of blocked DNA replication forks via replication fork reversal (RFR). RuvA specifically binds to HJ cruciform DNA, conferring on it an open structure. The RuvB hexamer acts as an ATP-dependent pump, pulling dsDNA into and through the RuvAB complex. RuvB forms 2 homohexamers on either side of HJ DNA bound by 1 or 2 RuvA tetramers; 4 subunits per hexamer contact DNA at a time. Coordinated motions by a converter formed by DNA-disengaged RuvB subunits stimulates ATP hydrolysis and nucleotide exchange. Immobilization of the converter enables RuvB to convert the ATP-contained energy into a lever motion, pulling 2 nucleotides of DNA out of the RuvA tetramer per ATP hydrolyzed, thus driving DNA branch migration. The RuvB motors rotate together with the DNA substrate, which together with the progressing nucleotide cycle form the mechanistic basis for DNA recombination by continuous HJ branch migration. Branch migration allows RuvC to scan DNA until it finds its consensus sequence, where it cleaves and resolves cruciform DNA. This Bartonella henselae (strain ATCC 49882 / DSM 28221 / CCUG 30454 / Houston 1) (Rochalimaea henselae) protein is Holliday junction branch migration complex subunit RuvB.